A 209-amino-acid polypeptide reads, in one-letter code: Histidine biosynthesis bifunctional protein HisIE (209 aa).

The interval 1 to 116 is phosphoribosyl-AMP cyclohydrolase; sequence MKQADELRFN…EEQAADRFGI (116 aa). Residues 117 to 209 are phosphoribosyl-ATP pyrophosphohydrolase; that stretch reads MNELERVIAE…LKKRHSEIEE (93 aa).

The protein in the N-terminal section; belongs to the PRA-CH family. It in the C-terminal section; belongs to the PRA-PH family.

The protein resides in the cytoplasm. The enzyme catalyses 1-(5-phospho-beta-D-ribosyl)-ATP + H2O = 1-(5-phospho-beta-D-ribosyl)-5'-AMP + diphosphate + H(+). The catalysed reaction is 1-(5-phospho-beta-D-ribosyl)-5'-AMP + H2O = 1-(5-phospho-beta-D-ribosyl)-5-[(5-phospho-beta-D-ribosylamino)methylideneamino]imidazole-4-carboxamide. The protein operates within amino-acid biosynthesis; L-histidine biosynthesis; L-histidine from 5-phospho-alpha-D-ribose 1-diphosphate: step 2/9. Its pathway is amino-acid biosynthesis; L-histidine biosynthesis; L-histidine from 5-phospho-alpha-D-ribose 1-diphosphate: step 3/9. In Bacillus subtilis (strain 168), this protein is Histidine biosynthesis bifunctional protein HisIE (hisI).